The chain runs to 430 residues: MIKSKIVLLSALVSCALISGCKEENKTNVSIEFMHSSVEQERQAVISKLIARFEKENPGITVKQVPVEEDAYNTKVITLSRSGSLPEVIETSHDYAKVMDKEQLIDRKAVATVISNVGEGAFYDGVLRIVRTEDGSAWTGVPVSAWIGGIWYRKDVLAKAGLEEPKNWQQLLDVAQKLNDPANKKYGIALPTAESVLTEQSFSQFALSNQANVFNAEGKITLDTPEMMQALTYYRDLTANTMPGSNDIMEVKDAFMNGTAPMAIYSTYILPAVIKEGDPKNVGFVVPTEKNSAVYGMLTSLTITAGQKTEETEAAEKFVTFMEQADNIADWVMMSPGAALPVNKAVVTTATWKDNDVIKALGELPNQLIGELPNIQVFGAVGDKNFTRMGDVTGSGVVSSMVHNVTVGKADLSTTLQASQKKLDELIEQH.

Positions 1-19 (MIKSKIVLLSALVSCALIS) are cleaved as a signal peptide.

The protein belongs to the bacterial solute-binding protein 1 family.

It is found in the periplasm. Its function is as follows. Probably part of the binding-protein-dependent transport system YcjNOP. The chain is Putative ABC transporter periplasmic-binding protein YcjN (ycjN) from Escherichia coli (strain K12).